We begin with the raw amino-acid sequence, 549 residues long: Oxygen-dependent choline dehydrogenase (549 aa).

4-33 (DFVIIGSGSAGSALAYRLSEDGANSVVVLE) is a binding site for FAD. His-465 serves as the catalytic Proton acceptor.

The protein belongs to the GMC oxidoreductase family. The cofactor is FAD.

It carries out the reaction choline + A = betaine aldehyde + AH2. It catalyses the reaction betaine aldehyde + NAD(+) + H2O = glycine betaine + NADH + 2 H(+). The protein operates within amine and polyamine biosynthesis; betaine biosynthesis via choline pathway; betaine aldehyde from choline (cytochrome c reductase route): step 1/1. Functionally, involved in the biosynthesis of the osmoprotectant glycine betaine. Catalyzes the oxidation of choline to betaine aldehyde and betaine aldehyde to glycine betaine at the same rate. The sequence is that of Oxygen-dependent choline dehydrogenase from Sinorhizobium medicae (strain WSM419) (Ensifer medicae).